The chain runs to 137 residues: Putative pre-16S rRNA nuclease (137 aa).

It belongs to the YqgF nuclease family.

It is found in the cytoplasm. Could be a nuclease involved in processing of the 5'-end of pre-16S rRNA. This chain is Putative pre-16S rRNA nuclease, found in Flavobacterium psychrophilum (strain ATCC 49511 / DSM 21280 / CIP 103535 / JIP02/86).